We begin with the raw amino-acid sequence, 373 residues long: Chaperone protein DnaJ (373 aa).

The J domain maps to 5 to 70 (DYYEVLGLQK…EKKSNYDQFG (66 aa)). Residues 132–214 (GVEKEITVNR…CRGNGNVRKT (83 aa)) form a CR-type zinc finger. Zn(2+)-binding residues include C145, C148, C162, C165, C188, C191, C202, and C205. 4 CXXCXGXG motif repeats span residues 145-152 (CEHCNGSG), 162-169 (CPTCSGTG), 188-195 (CDRCSGTG), and 202-209 (CTHCRGNG).

The protein belongs to the DnaJ family. Homodimer. It depends on Zn(2+) as a cofactor.

It localises to the cytoplasm. Participates actively in the response to hyperosmotic and heat shock by preventing the aggregation of stress-denatured proteins and by disaggregating proteins, also in an autonomous, DnaK-independent fashion. Unfolded proteins bind initially to DnaJ; upon interaction with the DnaJ-bound protein, DnaK hydrolyzes its bound ATP, resulting in the formation of a stable complex. GrpE releases ADP from DnaK; ATP binding to DnaK triggers the release of the substrate protein, thus completing the reaction cycle. Several rounds of ATP-dependent interactions between DnaJ, DnaK and GrpE are required for fully efficient folding. Also involved, together with DnaK and GrpE, in the DNA replication of plasmids through activation of initiation proteins. The protein is Chaperone protein DnaJ of Clostridium botulinum (strain Alaska E43 / Type E3).